We begin with the raw amino-acid sequence, 399 residues long: Tryptophan synthase beta chain (399 aa).

N6-(pyridoxal phosphate)lysine is present on lysine 92.

Belongs to the TrpB family. Tetramer of two alpha and two beta chains. Pyridoxal 5'-phosphate is required as a cofactor.

It catalyses the reaction (1S,2R)-1-C-(indol-3-yl)glycerol 3-phosphate + L-serine = D-glyceraldehyde 3-phosphate + L-tryptophan + H2O. It participates in amino-acid biosynthesis; L-tryptophan biosynthesis; L-tryptophan from chorismate: step 5/5. Functionally, the beta subunit is responsible for the synthesis of L-tryptophan from indole and L-serine. This is Tryptophan synthase beta chain from Thiobacillus denitrificans (strain ATCC 25259 / T1).